The sequence spans 312 residues: Porphobilinogen deaminase (312 aa).

Cys243 bears the S-(dipyrrolylmethanemethyl)cysteine mark.

It belongs to the HMBS family. Monomer. Dipyrromethane is required as a cofactor.

The catalysed reaction is 4 porphobilinogen + H2O = hydroxymethylbilane + 4 NH4(+). It functions in the pathway porphyrin-containing compound metabolism; protoporphyrin-IX biosynthesis; coproporphyrinogen-III from 5-aminolevulinate: step 2/4. Tetrapolymerization of the monopyrrole PBG into the hydroxymethylbilane pre-uroporphyrinogen in several discrete steps. The polypeptide is Porphobilinogen deaminase (Vibrio vulnificus (strain CMCP6)).